We begin with the raw amino-acid sequence, 413 residues long: Multifunctional CCA protein (413 aa).

ATP contacts are provided by Gly8 and Arg11. Residues Gly8 and Arg11 each contribute to the CTP site. Mg(2+) is bound by residues Glu21 and Asp23. Positions 91, 137, and 140 each coordinate ATP. CTP contacts are provided by Arg91, Arg137, and Arg140. The region spanning 228-329 is the HD domain; sequence TGEHTLLALA…LKLLEGLDLF (102 aa).

Belongs to the tRNA nucleotidyltransferase/poly(A) polymerase family. Bacterial CCA-adding enzyme type 1 subfamily. Monomer. Can also form homodimers and oligomers. It depends on Mg(2+) as a cofactor. Requires Ni(2+) as cofactor.

The catalysed reaction is a tRNA precursor + 2 CTP + ATP = a tRNA with a 3' CCA end + 3 diphosphate. It catalyses the reaction a tRNA with a 3' CCA end + 2 CTP + ATP = a tRNA with a 3' CCACCA end + 3 diphosphate. Its function is as follows. Catalyzes the addition and repair of the essential 3'-terminal CCA sequence in tRNAs without using a nucleic acid template. Adds these three nucleotides in the order of C, C, and A to the tRNA nucleotide-73, using CTP and ATP as substrates and producing inorganic pyrophosphate. tRNA 3'-terminal CCA addition is required both for tRNA processing and repair. Also involved in tRNA surveillance by mediating tandem CCA addition to generate a CCACCA at the 3' terminus of unstable tRNAs. While stable tRNAs receive only 3'-terminal CCA, unstable tRNAs are marked with CCACCA and rapidly degraded. This Alkalilimnicola ehrlichii (strain ATCC BAA-1101 / DSM 17681 / MLHE-1) protein is Multifunctional CCA protein.